Here is a 95-residue protein sequence, read N- to C-terminus: UPF0235 protein AnaeK_1146 (95 aa).

It belongs to the UPF0235 family.

The chain is UPF0235 protein AnaeK_1146 from Anaeromyxobacter sp. (strain K).